A 307-amino-acid chain; its full sequence is 4-diphosphocytidyl-2-C-methyl-D-erythritol kinase (307 aa).

Residue Lys-9 is part of the active site. 94–104 (PIGAGLAGGSS) contributes to the ATP binding site. Residue Asp-136 is part of the active site.

The protein belongs to the GHMP kinase family. IspE subfamily.

The catalysed reaction is 4-CDP-2-C-methyl-D-erythritol + ATP = 4-CDP-2-C-methyl-D-erythritol 2-phosphate + ADP + H(+). Its pathway is isoprenoid biosynthesis; isopentenyl diphosphate biosynthesis via DXP pathway; isopentenyl diphosphate from 1-deoxy-D-xylulose 5-phosphate: step 3/6. Functionally, catalyzes the phosphorylation of the position 2 hydroxy group of 4-diphosphocytidyl-2C-methyl-D-erythritol. This chain is 4-diphosphocytidyl-2-C-methyl-D-erythritol kinase, found in Synechococcus sp. (strain CC9902).